The chain runs to 415 residues: Protein-lysine N-trimethyltransferase SMYD5 (415 aa).

Positions 20-351 (NCVDVRFINN…PGEEICISYL (332 aa)) constitute an SET domain. An MYND-type zinc finger spans residues 95–135 (PHPELCKVRPDRHQACPQCQVMYCSSECRQAAMDQYHKILC). Position 350 (Tyr-350) interacts with S-adenosyl-L-methionine. Residues 388–415 (DMTSEDEEEVEGEGETEGEDMEDEMTDV) are disordered.

This sequence belongs to the class V-like SAM-binding methyltransferase superfamily. In terms of tissue distribution, expressed at high levels in the ovary and at lower levels in the fin, testis and brain.

Its subcellular location is the cytoplasm. It carries out the reaction L-lysyl-[protein] + 3 S-adenosyl-L-methionine = N(6),N(6),N(6)-trimethyl-L-lysyl-[protein] + 3 S-adenosyl-L-homocysteine + 3 H(+). It catalyses the reaction L-lysyl(20)-[histone H4] + 3 S-adenosyl-L-methionine = N(6),N(6),N(6)-trimethyl-L-lysyl(20)-[histone H4] + 3 S-adenosyl-L-homocysteine + 3 H(+). The catalysed reaction is L-lysyl(36)-[histone H3] + 3 S-adenosyl-L-methionine = N(6),N(6),N(6)-trimethyl-L-lysyl(36)-[histone H3] + 3 S-adenosyl-L-homocysteine + 3 H(+). Protein-lysine N-trimethyltransferase that specifically catalyzes trimethylation of 'Lys-22' of the RPL40/eL40 subunit of the 60S ribosome, thereby promoting translation elongation and protein synthesis. May also act as a histone methyltransferase in the context of histone octamers, but not on nucleosome substrates: trimethylates 'Lys-36' of histone H3 and 'Lys-20' of histone H4 to form H3K36me3 and H4K20me3, respectively. The histone methyltransferase activity, which is independent of its SET domain, is however unsure in vivo. Plays a crucial role in hematopoiesis during embryogenesis by negatively regulating expression of genes related to both primitive and definitive hematopoiesis. The sequence is that of Protein-lysine N-trimethyltransferase SMYD5 from Danio rerio (Zebrafish).